Here is a 105-residue protein sequence, read N- to C-terminus: Small ribosomal subunit protein uS10 (105 aa).

This sequence belongs to the universal ribosomal protein uS10 family. As to quaternary structure, part of the 30S ribosomal subunit.

In terms of biological role, involved in the binding of tRNA to the ribosomes. This chain is Small ribosomal subunit protein uS10, found in Desulfovibrio desulfuricans (strain ATCC 27774 / DSM 6949 / MB).